The sequence spans 501 residues: Aromatase 3 (501 aa).

Position 435 (Cys-435) interacts with heme.

This sequence belongs to the cytochrome P450 family. It depends on heme as a cofactor. As to expression, ovary.

It is found in the membrane. It catalyses the reaction testosterone + 3 reduced [NADPH--hemoprotein reductase] + 3 O2 = 17beta-estradiol + formate + 3 oxidized [NADPH--hemoprotein reductase] + 4 H2O + 4 H(+). It carries out the reaction androst-4-ene-3,17-dione + 3 reduced [NADPH--hemoprotein reductase] + 3 O2 = estrone + formate + 3 oxidized [NADPH--hemoprotein reductase] + 4 H2O + 4 H(+). Functionally, catalyzes the formation of aromatic C18 estrogens from C19 androgens. The protein is Aromatase 3 (CYP19A3) of Sus scrofa (Pig).